Reading from the N-terminus, the 1119-residue chain is Protein translocase subunit SecA (1119 aa).

Residues glutamine 177, 195-199 (GEGKT), and aspartate 692 each bind ATP. The segment at 1025–1081 (APSIHEARQTKSKEKVETRKEEIPNMDERAAQSRAAGNTQRQQPEVTETIVRDRPKI) is disordered. Positions 1029–1055 (HEARQTKSKEKVETRKEEIPNMDERAA) are enriched in basic and acidic residues. Polar residues predominate over residues 1059–1070 (AAGNTQRQQPEV).

Belongs to the SecA family. In terms of assembly, monomer and homodimer. Part of the essential Sec protein translocation apparatus which comprises SecA, SecYEG and auxiliary proteins SecDF. Other proteins may also be involved.

The protein localises to the cell inner membrane. It localises to the cytoplasm. The catalysed reaction is ATP + H2O + cellular proteinSide 1 = ADP + phosphate + cellular proteinSide 2.. Its function is as follows. Part of the Sec protein translocase complex. Interacts with the SecYEG preprotein conducting channel. Has a central role in coupling the hydrolysis of ATP to the transfer of proteins into and across the cell membrane, serving as an ATP-driven molecular motor driving the stepwise translocation of polypeptide chains across the membrane. The protein is Protein translocase subunit SecA of Christiangramia forsetii (strain DSM 17595 / CGMCC 1.15422 / KT0803) (Gramella forsetii).